The following is a 291-amino-acid chain: Acetylglutamate kinase (291 aa).

Substrate-binding positions include 65 to 66 (GG), R87, and N186.

The protein belongs to the acetylglutamate kinase family. ArgB subfamily.

It localises to the cytoplasm. It carries out the reaction N-acetyl-L-glutamate + ATP = N-acetyl-L-glutamyl 5-phosphate + ADP. It participates in amino-acid biosynthesis; L-arginine biosynthesis; N(2)-acetyl-L-ornithine from L-glutamate: step 2/4. Functionally, catalyzes the ATP-dependent phosphorylation of N-acetyl-L-glutamate. The chain is Acetylglutamate kinase from Mycolicibacterium vanbaalenii (strain DSM 7251 / JCM 13017 / BCRC 16820 / KCTC 9966 / NRRL B-24157 / PYR-1) (Mycobacterium vanbaalenii).